The primary structure comprises 257 residues: MILIEDLTVVSQREIAPRIFEMVLKGEMVADMQLGQFVHLKVPDPSKLLRRPISISEIDYNKKEATIVYRVEREGTAILSKMVAGQTIDTMGPQGNGFDISIIEAGQKALLVGGGIGVPPLVETAKQLKAKGVEVVSVIGFANKNAVILEDKLRACGDVYVTTDDGSYGIKGYVSTVIDNFDWTPDAVYSCGAPGMLKYVDSKFENHPHAYVSMEARMACGMGACYACVVHVKGETDAKNLRVCEEGPVFPTGKVIV.

Residues 2-100 enclose the FAD-binding FR-type domain; sequence ILIEDLTVVS…MGPQGNGFDI (99 aa). Residues 51–54, 68–70, and 75–76 contribute to the FAD site; these read RPIS, VYR, and GT. Positions 220, 225, 228, and 244 each coordinate [2Fe-2S] cluster.

The protein belongs to the PyrK family. Heterotetramer of 2 PyrK and 2 PyrD type B subunits. [2Fe-2S] cluster is required as a cofactor. The cofactor is FAD.

Its pathway is pyrimidine metabolism; UMP biosynthesis via de novo pathway; orotate from (S)-dihydroorotate (NAD(+) route): step 1/1. Functionally, responsible for channeling the electrons from the oxidation of dihydroorotate from the FMN redox center in the PyrD type B subunit to the ultimate electron acceptor NAD(+). The chain is Dihydroorotate dehydrogenase B (NAD(+)), electron transfer subunit from Streptococcus thermophilus (strain ATCC BAA-491 / LMD-9).